The chain runs to 223 residues: uncharacterized protein (223 aa).

Positions 1–22 are cleaved as a signal peptide; sequence MHLKKALCPALCTFLIHLCLHA. The 175-residue stretch at 30-204 folds into the VWFA domain; the sequence is DIFLMIDKSR…RSIAAAHSKR (175 aa). A disordered region spans residues 199 to 223; the sequence is AAHSKRPTPTPPAKESSPRYTPSLD.

This is an uncharacterized protein from Treponema pallidum (strain Nichols).